The sequence spans 389 residues: Galactokinase (389 aa).

Substrate is bound at residue 33 to 36 (EHTD). Residues Ser67 and 124–130 (GAGLSSS) each bind ATP. Mg(2+)-binding residues include Ser130 and Glu162. Asp174 acts as the Proton acceptor in catalysis. Tyr224 provides a ligand contact to substrate.

The protein belongs to the GHMP kinase family. GalK subfamily.

The protein localises to the cytoplasm. It catalyses the reaction alpha-D-galactose + ATP = alpha-D-galactose 1-phosphate + ADP + H(+). It participates in carbohydrate metabolism; galactose metabolism. Its function is as follows. Catalyzes the transfer of the gamma-phosphate of ATP to D-galactose to form alpha-D-galactose-1-phosphate (Gal-1-P). The polypeptide is Galactokinase (Fusobacterium nucleatum subsp. nucleatum (strain ATCC 25586 / DSM 15643 / BCRC 10681 / CIP 101130 / JCM 8532 / KCTC 2640 / LMG 13131 / VPI 4355)).